A 205-amino-acid polypeptide reads, in one-letter code: Large ribosomal subunit protein bL25 (205 aa).

The interval 180–205 (HEEVAEEAEETEGEDAEEAPAAEGEE) is disordered. The segment covering 183–205 (VAEEAEETEGEDAEEAPAAEGEE) has biased composition (acidic residues).

It belongs to the bacterial ribosomal protein bL25 family. CTC subfamily. Part of the 50S ribosomal subunit; part of the 5S rRNA/L5/L18/L25 subcomplex. Contacts the 5S rRNA. Binds to the 5S rRNA independently of L5 and L18.

Its function is as follows. This is one of the proteins that binds to the 5S RNA in the ribosome where it forms part of the central protuberance. The sequence is that of Large ribosomal subunit protein bL25 from Corynebacterium diphtheriae (strain ATCC 700971 / NCTC 13129 / Biotype gravis).